A 141-amino-acid chain; its full sequence is Mitochondrial import inner membrane translocase subunit Tim16 (141 aa).

Disordered stretches follow at residues 34–53 and 108–141; these read AARRAGGGKQGDKSAESNLR and LDHEIKAHEQPRSSNTEAAQDTAEESQSRSRQRR. Positions 60-113 are J-like; it reads EAKQILNIDDPKNVDAITKNYEHLFQVNERSKGGSFYIQSKVFRAKERLDHEIK. Residues 108–118 are compositionally biased toward basic and acidic residues; it reads LDHEIKAHEQP.

This sequence belongs to the TIM16/PAM16 family. Probable component of the PAM complex at least composed of a mitochondrial HSP70 protein, Roe1, TIM44, blp/TIM16 and TIM14. Associates with the TIM23 complex. In terms of tissue distribution, expressed in distinct cells in the embryonic and larval nervous system.

Its subcellular location is the mitochondrion inner membrane. Functionally, regulates ATP-dependent protein translocation into the mitochondrial matrix. Essential for larval development. The protein is Mitochondrial import inner membrane translocase subunit Tim16 (blp) of Drosophila melanogaster (Fruit fly).